Reading from the N-terminus, the 209-residue chain is Uracil phosphoribosyltransferase (209 aa).

Residues Arg79, Arg104, and 131-139 contribute to the 5-phospho-alpha-D-ribose 1-diphosphate site; that span reads DPMLATGGS. Uracil-binding positions include Ile194 and 199–201; that span reads GDA. Asp200 contributes to the 5-phospho-alpha-D-ribose 1-diphosphate binding site.

This sequence belongs to the UPRTase family. The cofactor is Mg(2+).

It carries out the reaction UMP + diphosphate = 5-phospho-alpha-D-ribose 1-diphosphate + uracil. The protein operates within pyrimidine metabolism; UMP biosynthesis via salvage pathway; UMP from uracil: step 1/1. Allosterically activated by GTP. Catalyzes the conversion of uracil and 5-phospho-alpha-D-ribose 1-diphosphate (PRPP) to UMP and diphosphate. The protein is Uracil phosphoribosyltransferase of Exiguobacterium sibiricum (strain DSM 17290 / CCUG 55495 / CIP 109462 / JCM 13490 / 255-15).